The sequence spans 175 residues: Small ribosomal subunit protein uS7 (175 aa).

Belongs to the universal ribosomal protein uS7 family. Part of the 30S ribosomal subunit. Contacts proteins S9 and S11.

Functionally, one of the primary rRNA binding proteins, it binds directly to 16S rRNA where it nucleates assembly of the head domain of the 30S subunit. Is located at the subunit interface close to the decoding center, probably blocks exit of the E-site tRNA. The chain is Small ribosomal subunit protein uS7 from Neorickettsia sennetsu (strain ATCC VR-367 / Miyayama) (Ehrlichia sennetsu).